The chain runs to 117 residues: Minor capsid protein VP2 (117 aa).

Belongs to the lagovirus VP2 protein family. Homooligomer. The portal-like structure consists in 12 copies of VP2. Interacts with capsid protein VP1.

Its subcellular location is the virion. It localises to the host cytoplasm. Its function is as follows. Minor structural protein that forms a portal-like structure at a unique three-fold axis of symmetry, following binding to the host receptor. The channel formed by VP2 may allow the delivery of the viral genome through the host endosomal membrane. In Oryctolagus cuniculus (Rabbit), this protein is Minor capsid protein VP2.